A 196-amino-acid polypeptide reads, in one-letter code: NADH-quinone oxidoreductase subunit C (196 aa).

The protein belongs to the complex I 30 kDa subunit family. In terms of assembly, NDH-1 is composed of 14 different subunits. Subunits NuoB, C, D, E, F, and G constitute the peripheral sector of the complex.

It is found in the cell inner membrane. The catalysed reaction is a quinone + NADH + 5 H(+)(in) = a quinol + NAD(+) + 4 H(+)(out). Functionally, NDH-1 shuttles electrons from NADH, via FMN and iron-sulfur (Fe-S) centers, to quinones in the respiratory chain. The immediate electron acceptor for the enzyme in this species is believed to be ubiquinone. Couples the redox reaction to proton translocation (for every two electrons transferred, four hydrogen ions are translocated across the cytoplasmic membrane), and thus conserves the redox energy in a proton gradient. The sequence is that of NADH-quinone oxidoreductase subunit C from Rickettsia bellii (strain RML369-C).